The primary structure comprises 323 residues: GDP-L-fucose synthase 1 (323 aa).

Position 2 is an N-acetylalanine (alanine 2). An NADP(+)-binding site is contributed by 23 to 29 (GHRGLVG). The active-site Proton donor/acceptor is the tyrosine 149. Residues lysine 153, 176 to 179 (PTNL), and histidine 192 each bind NADP(+). Residues arginine 200, tryptophan 215, arginine 222, and aspartate 282 each contribute to the substrate site.

It belongs to the NAD(P)-dependent epimerase/dehydratase family. Fucose synthase subfamily. As to quaternary structure, binds and stabilizes MUR1. Homodimer. As to expression, highly expressed in roots and flowers, less abundant in leaves, stems and siliques.

It catalyses the reaction GDP-beta-L-fucose + NADP(+) = GDP-4-dehydro-alpha-D-rhamnose + NADPH + H(+). The protein operates within nucleotide-sugar biosynthesis; GDP-L-fucose biosynthesis via de novo pathway; GDP-L-fucose from GDP-alpha-D-mannose: step 2/2. Catalyzes the two-step NADP-dependent conversion of GDP-4-dehydro-6-deoxy-D-mannose to GDP-fucose, involving an epimerase and a reductase reaction. Not involved in the synthesis of GDP-L-galactose from GDP-D-mannose. In Arabidopsis thaliana (Mouse-ear cress), this protein is GDP-L-fucose synthase 1 (GER1).